The sequence spans 328 residues: D-cysteine desulfhydrase (328 aa).

An N6-(pyridoxal phosphate)lysine modification is found at lysine 51.

This sequence belongs to the ACC deaminase/D-cysteine desulfhydrase family. As to quaternary structure, homodimer. Pyridoxal 5'-phosphate serves as cofactor.

It carries out the reaction D-cysteine + H2O = hydrogen sulfide + pyruvate + NH4(+) + H(+). Its function is as follows. Catalyzes the alpha,beta-elimination reaction of D-cysteine and of several D-cysteine derivatives. It could be a defense mechanism against D-cysteine. In Salmonella typhimurium (strain LT2 / SGSC1412 / ATCC 700720), this protein is D-cysteine desulfhydrase.